A 120-amino-acid chain; its full sequence is Large ribosomal subunit protein uL18 (120 aa).

It belongs to the universal ribosomal protein uL18 family. In terms of assembly, part of the 50S ribosomal subunit; part of the 5S rRNA/L5/L18/L25 subcomplex. Contacts the 5S and 23S rRNAs.

This is one of the proteins that bind and probably mediate the attachment of the 5S RNA into the large ribosomal subunit, where it forms part of the central protuberance. This is Large ribosomal subunit protein uL18 from Azorhizobium caulinodans (strain ATCC 43989 / DSM 5975 / JCM 20966 / LMG 6465 / NBRC 14845 / NCIMB 13405 / ORS 571).